Consider the following 276-residue polypeptide: Ribosomal RNA small subunit methyltransferase J (276 aa).

S-adenosyl-L-methionine-binding positions include 135-136 (ER) and D191.

This sequence belongs to the methyltransferase superfamily. RsmJ family.

It is found in the cytoplasm. It catalyses the reaction guanosine(1516) in 16S rRNA + S-adenosyl-L-methionine = N(2)-methylguanosine(1516) in 16S rRNA + S-adenosyl-L-homocysteine + H(+). Specifically methylates the guanosine in position 1516 of 16S rRNA. The sequence is that of Ribosomal RNA small subunit methyltransferase J from Hydrogenovibrio crunogenus (strain DSM 25203 / XCL-2) (Thiomicrospira crunogena).